Reading from the N-terminus, the 127-residue chain is MIRTMMNAKIHRARVTESNLNYVGSITIDADILDAVDILPNEKVAIVNNNNGARFETYVIKGERGSGKICLNGAASRLVEVDDVVIIMTYAQLNETEIADHAPKVAVMNEKNEIVEMIHEKENTVVL.

Ser-25 acts as the Schiff-base intermediate with substrate; via pyruvic acid in catalysis. Residue Ser-25 is modified to Pyruvic acid (Ser). Residue Thr-57 participates in substrate binding. Residue Tyr-58 is the Proton donor of the active site. 73-75 is a binding site for substrate; sequence GAA.

This sequence belongs to the PanD family. Heterooctamer of four alpha and four beta subunits. The cofactor is pyruvate. Post-translationally, is synthesized initially as an inactive proenzyme, which is activated by self-cleavage at a specific serine bond to produce a beta-subunit with a hydroxyl group at its C-terminus and an alpha-subunit with a pyruvoyl group at its N-terminus.

Its subcellular location is the cytoplasm. The catalysed reaction is L-aspartate + H(+) = beta-alanine + CO2. The protein operates within cofactor biosynthesis; (R)-pantothenate biosynthesis; beta-alanine from L-aspartate: step 1/1. Its function is as follows. Catalyzes the pyruvoyl-dependent decarboxylation of aspartate to produce beta-alanine. In Staphylococcus carnosus (strain TM300), this protein is Aspartate 1-decarboxylase.